The following is a 729-amino-acid chain: Fatty acid oxidation complex subunit alpha (729 aa).

An enoyl-CoA hydratase/isomerase region spans residues Met1–Lys189. Asp296 contributes to the substrate binding site. Positions Glu311–Ala729 are 3-hydroxyacyl-CoA dehydrogenase. Residues Met324, Asp343, Val400–Glu402, Lys407, and Ser429 contribute to the NAD(+) site. Residue His450 is the For 3-hydroxyacyl-CoA dehydrogenase activity of the active site. NAD(+) is bound at residue Asn453. Positions 500 and 660 each coordinate substrate. The tract at residues Arg708 to Ala729 is disordered.

This sequence in the N-terminal section; belongs to the enoyl-CoA hydratase/isomerase family. The protein in the C-terminal section; belongs to the 3-hydroxyacyl-CoA dehydrogenase family. In terms of assembly, heterotetramer of two alpha chains (FadB) and two beta chains (FadA).

The catalysed reaction is a (3S)-3-hydroxyacyl-CoA + NAD(+) = a 3-oxoacyl-CoA + NADH + H(+). The enzyme catalyses a (3S)-3-hydroxyacyl-CoA = a (2E)-enoyl-CoA + H2O. It carries out the reaction a 4-saturated-(3S)-3-hydroxyacyl-CoA = a (3E)-enoyl-CoA + H2O. It catalyses the reaction (3S)-3-hydroxybutanoyl-CoA = (3R)-3-hydroxybutanoyl-CoA. The catalysed reaction is a (3Z)-enoyl-CoA = a 4-saturated (2E)-enoyl-CoA. The enzyme catalyses a (3E)-enoyl-CoA = a 4-saturated (2E)-enoyl-CoA. It functions in the pathway lipid metabolism; fatty acid beta-oxidation. Its function is as follows. Involved in the aerobic and anaerobic degradation of long-chain fatty acids via beta-oxidation cycle. Catalyzes the formation of 3-oxoacyl-CoA from enoyl-CoA via L-3-hydroxyacyl-CoA. It can also use D-3-hydroxyacyl-CoA and cis-3-enoyl-CoA as substrate. The chain is Fatty acid oxidation complex subunit alpha from Salmonella enteritidis PT4 (strain P125109).